The chain runs to 907 residues: Potassium channel AKT3 (907 aa).

The Cytoplasmic segment spans residues 1 to 75 (MPTTKCAVPL…YDRRYELWNN (75 aa)). The helical transmembrane segment at 76-96 (YLILLVVYSAWVTPFEFGFVP) threads the bilayer. The Extracellular segment spans residues 97 to 102 (EPAGAL). A helical membrane pass occupies residues 103-123 (AAADNAVNAFFAVDIVLTFFV). Over 124–146 (AYTDPKTFLLQDDPRKIALRYIT) the chain is Cytoplasmic. Residues 147 to 167 (TWFVLDVVATIPTELARRILP) form a helical membrane-spanning segment. Over 168-174 (PDLRSYG) the chain is Extracellular. Residues 175–195 (FFGILRLWRLHRVGILFARLE) traverse the membrane as a helical; Voltage-sensor segment. At 196–209 (KDRKFSYFWVRCVK) the chain is on the cytoplasmic side. The chain crosses the membrane as a helical span at residues 210–230 (LVCVTLFAVHCSACFYYLLAD). Residues 231–257 (RYPDPTNTWISAYMPNFHKASIWSRYV) lie on the Extracellular side of the membrane. The segment at residues 258–277 (ASMYWSITTLSTVGYGDMHA) is an intramembrane region (pore-forming). Over 278–288 (ENTGEMVFTTT) the chain is Extracellular. Residues 289 to 309 (YMLFNLGLTAYIIGNMTNLVV) form a helical membrane-spanning segment. The Cytoplasmic portion of the chain corresponds to 310 to 907 (HGTSRTRKFR…VPPENRSRNQ (598 aa)). Position 388–512 (388–512 (LFEGVSNDLI…TIVMNNLIQY (125 aa))) interacts with a nucleoside 3',5'-cyclic phosphate. ANK repeat units follow at residues 539–568 (DFPI…DPNE), 572–601 (YGRT…DSNS), 605–634 (EGRV…DLSG), 636–665 (DAAP…DVSG), and 670–699 (DGTT…DADA). 2 disordered regions span residues 726-779 (ATRH…TPQR) and 801-824 (GGYR…SSPP). Positions 754–776 (SSPSSSSRRGRTSSTSAASARST) are enriched in low complexity. A compositionally biased stretch (gly residues) spans 803-812 (YRGGGGGGGA). The KHA domain occupies 827-907 (RVAISCPESR…VPPENRSRNQ (81 aa)).

The protein belongs to the potassium channel family. Plant (TC 1.A.1.4) subfamily.

The protein resides in the membrane. In terms of biological role, probable inward-rectifying potassium channel. Assuming opened or closed conformations in response to the voltage difference across the membrane, the channel is activated by hyperpolarization. This is Potassium channel AKT3 from Oryza sativa subsp. japonica (Rice).